The sequence spans 548 residues: Methyl-accepting chemotaxis protein HlyB (548 aa).

At 1 to 10 (MIINKFSLKW) the chain is on the cytoplasmic side. The helical transmembrane segment at 11 to 31 (MLAIAVAIPAIALLFVAFTSL) threads the bilayer. Residues 32-199 (NTMSVMQAQS…SFEAGRTKQM (168 aa)) lie on the Periplasmic side of the membrane. Residues 200–220 (VIIAAGLIISFITSLVIITNL) form a helical membrane-spanning segment. An HAMP domain is found at 218 to 271 (TNLRSRVAYLKDRMSSAAANLSLRTRLELDGNDELCDIGKSFNAFIDKVHHSIE). Over 221 to 548 (RSRVAYLKDR…LDKLVGSFEL (328 aa)) the chain is Cytoplasmic. Positions 276–512 (NSKELATMAS…DINRNVEDIN (237 aa)) constitute a Methyl-accepting transducer domain.

Belongs to the methyl-accepting chemotaxis (MCP) protein family.

It localises to the cell inner membrane. Functionally, chemotactic-signal transducers respond to changes in the concentration of attractants and repellents in the environment, transduce a signal from the outside to the inside of the cell, and facilitate sensory adaptation through the variation of the level of methylation. This is Methyl-accepting chemotaxis protein HlyB (hlyB) from Vibrio cholerae serotype O1 (strain ATCC 39315 / El Tor Inaba N16961).